The primary structure comprises 146 residues: Hemoglobin subunit beta-0 (146 aa).

In terms of domain architecture, Globin spans 2–146 (EWTDFERATI…VVSSLGRQYH (145 aa)). Histidine 63 and histidine 92 together coordinate heme b.

The protein belongs to the globin family. Heterotetramer of two alpha chains and two beta chains. In terms of tissue distribution, red blood cells.

In terms of biological role, involved in oxygen transport from gills to the various peripheral tissues. In Pagothenia borchgrevinki (Bald rockcod), this protein is Hemoglobin subunit beta-0 (hbb0).